Reading from the N-terminus, the 125-residue chain is Small ribosomal subunit protein uS13 (125 aa).

The disordered stretch occupies residues 97–125 (PVRGQKTRSNARTRKGPRPSRIKTKKKSS). Residues 101-125 (QKTRSNARTRKGPRPSRIKTKKKSS) are compositionally biased toward basic residues.

Belongs to the universal ribosomal protein uS13 family. Part of the 30S ribosomal subunit. Forms a loose heterodimer with protein S19. Forms two bridges to the 50S subunit in the 70S ribosome.

In terms of biological role, located at the top of the head of the 30S subunit, it contacts several helices of the 16S rRNA. In the 70S ribosome it contacts the 23S rRNA (bridge B1a) and protein L5 of the 50S subunit (bridge B1b), connecting the 2 subunits; these bridges are implicated in subunit movement. Contacts the tRNAs in the A and P-sites. The polypeptide is Small ribosomal subunit protein uS13 (Thermotoga maritima (strain ATCC 43589 / DSM 3109 / JCM 10099 / NBRC 100826 / MSB8)).